The primary structure comprises 428 residues: Glutamate-1-semialdehyde 2,1-aminomutase (428 aa).

Residue lysine 265 is modified to N6-(pyridoxal phosphate)lysine.

Belongs to the class-III pyridoxal-phosphate-dependent aminotransferase family. HemL subfamily. Homodimer. It depends on pyridoxal 5'-phosphate as a cofactor.

The protein resides in the cytoplasm. It catalyses the reaction (S)-4-amino-5-oxopentanoate = 5-aminolevulinate. Its pathway is porphyrin-containing compound metabolism; protoporphyrin-IX biosynthesis; 5-aminolevulinate from L-glutamyl-tRNA(Glu): step 2/2. This is Glutamate-1-semialdehyde 2,1-aminomutase from Hamiltonella defensa subsp. Acyrthosiphon pisum (strain 5AT).